The following is a 37-amino-acid chain: uncharacterized protein (37 aa).

The helical transmembrane segment at 17-37 threads the bilayer; sequence TFVLIVVLFILLIIVGAAFIC.

Belongs to the SscA family.

The protein localises to the membrane. This is an uncharacterized protein from Bacillus subtilis (strain 168).